A 238-amino-acid chain; its full sequence is Monocyte to macrophage differentiation factor (238 aa).

Over 1–28 the chain is Cytoplasmic; sequence MRFKNRFQRFMNHRAPANGRYKPTCYEH. Residues 29–49 form a helical membrane-spanning segment; that stretch reads AANCYTHAFLIVPAIVGSALL. The Lumenal portion of the chain corresponds to 50 to 61; that stretch reads HRLSDDCWEKIT. Residues 62–82 traverse the membrane as a helical segment; the sequence is AWIYGMGLCALFIVSTVFHIV. Topologically, residues 83–101 are cytoplasmic; it reads SWKKSHLRTVEHCFHMCDR. Residues 102–122 traverse the membrane as a helical segment; sequence MVIYFFIAASYAPWLNLRELG. The Lumenal segment spans residues 123–124; sequence PL. A helical transmembrane segment spans residues 125–145; it reads ASHMRWFIWLMAAGGTIYVFL. Over 146 to 151 the chain is Cytoplasmic; it reads YHEKYK. Residues 152–172 form a helical membrane-spanning segment; sequence VVELFFYLTMGFSPALVVTSM. The Lumenal portion of the chain corresponds to 173 to 174; that stretch reads NN. The helical transmembrane segment at 175 to 195 threads the bilayer; it reads TDGLQELACGGLIYCLGVVFF. The Cytoplasmic segment spans residues 196-198; that stretch reads KSD. Residues 199–219 traverse the membrane as a helical segment; that stretch reads GIIPFAHAIWHLFVATAAAVH. Topologically, residues 220–238 are lumenal; it reads YYAIWKYLYRSPTDFMRHL.

The protein belongs to the ADIPOR family. In terms of tissue distribution, exhibits relatively ubiquitous expression with preferential expression in mature (in vitro differentiated) macrophages.

The protein localises to the late endosome membrane. It is found in the lysosome membrane. In terms of biological role, involved in the dynamics of lysosomal membranes associated with microglial activation following brain lesion. The sequence is that of Monocyte to macrophage differentiation factor from Homo sapiens (Human).